The following is a 603-amino-acid chain: Class E vacuolar protein-sorting machinery protein hse1 (603 aa).

The 130-residue stretch at 16 to 145 (ATDENLTSEN…KLKTQNPNLQ (130 aa)) folds into the VHS domain. Disordered regions lie at residues 140 to 164 (QNPNLQPPSKPGKREITEADRQKEE) and 177 to 212 (EKPSAAPEPKAEPSTSASVPASQTQAATSQAVPPGT). A compositionally biased stretch (basic and acidic residues) spans 151–163 (GKREITEADRQKE). Residues 162 to 181 (KEEEELQMALALSIREKPSA) enclose the UIM domain. Residues 180-210 (SAAPEPKAEPSTSASVPASQTQAATSQAVPP) are compositionally biased toward low complexity. The SH3 domain occupies 215-274 (ATVSRVRALFDFQPSEPGELQFRKGDIIAVLESVYKDWWKGSLRGQTGIFPLNYVEKLPD). Positions 371-603 (HPAQPQYGRP…ANSNPNSYYR (233 aa)) are disordered. The segment covering 374-397 (QPQYGRPGQTPYGYPGPAAPLGYP) has biased composition (low complexity). Polar residues predominate over residues 461–473 (TYDNPQELGTSVY). Over residues 487–497 (PYPPSGAPVPP) the composition is skewed to pro residues. A compositionally biased stretch (low complexity) spans 498–508 (GVHQQFQHQQQ). The segment covering 540–561 (PPYPTAPVAHQPPPSHQPPPVP) has biased composition (pro residues). The span at 586–603 (YNPSQAGAANSNPNSYYR) shows a compositional bias: polar residues.

This sequence belongs to the STAM family. Component of the ESCRT-0 complex composed of HSE1 and VPS27.

The protein resides in the endosome membrane. In terms of biological role, component of the ESCRT-0 complex which is the sorting receptor for ubiquitinated cargo proteins at the multivesicular body (MVB). The chain is Class E vacuolar protein-sorting machinery protein hse1 (hse1) from Neosartorya fischeri (strain ATCC 1020 / DSM 3700 / CBS 544.65 / FGSC A1164 / JCM 1740 / NRRL 181 / WB 181) (Aspergillus fischerianus).